The primary structure comprises 839 residues: Transcription regulator protein BACH2 (839 aa).

The 67-residue stretch at C37–R103 folds into the BTB domain. 2 disordered regions span residues Q150 to M170 and H247 to S331. Over residues G161–M170 the composition is skewed to acidic residues. The span at H247–N263 shows a compositional bias: polar residues. Residues T297–Q312 show a composition bias toward basic and acidic residues. A Phosphoserine modification is found at S314. Positions T321–S331 are enriched in low complexity. Glycyl lysine isopeptide (Lys-Gly) (interchain with G-Cter in SUMO2) cross-links involve residues K381 and K420. A Phosphoserine modification is found at S520. The segment at Q582–G609 is disordered. Residues S583 to E597 are compositionally biased toward polar residues. Residues F645 to L708 form the bZIP domain. The tract at residues R650–K666 is basic motif. A leucine-zipper region spans residues I670–I677. The disordered stretch occupies residues P778 to S813. Polar residues predominate over residues P781 to S790. Positions D819–A839 match the Nuclear export signal motif.

It belongs to the bZIP family. CNC subfamily. In terms of assembly, homodimer; disulfide-linked. Heterodimer of BACH2 and Maf-related transcription factors. Post-translationally, the reversible disulfide bond may provide a mechanism to regulate the activity in oxidative stress responses. Phosphorylation at Ser-520 downstream of the PI-3K pathway promotes nuclear export. As to expression, detected in brain and spleen.

Its subcellular location is the cytoplasm. The protein resides in the nucleus. Transcriptional regulator that acts as a repressor or activator. Binds to Maf recognition elements (MARE). Plays an important role in coordinating transcription activation and repression by MAFK. Induces apoptosis in response to oxidative stress through repression of the antiapoptotic factor HMOX1. Positively regulates the nuclear import of actin. Is a key regulator of adaptive immunity, crucial for the maintenance of regulatory T-cell function and B-cell maturation. The protein is Transcription regulator protein BACH2 (Bach2) of Mus musculus (Mouse).